Here is a 363-residue protein sequence, read N- to C-terminus: NudC domain-containing protein 3 (363 aa).

Residues 120–143 (AADLSGPQEVEKEEPPGSQDPEHT) form a disordered region. A compositionally biased stretch (basic and acidic residues) spans 128–143 (EVEKEEPPGSQDPEHT). Positions 187 to 279 (AIRENYIWSQ…VGEYWWSAIL (93 aa)) constitute a CS domain. Phosphoserine occurs at positions 342 and 357.

This chain is NudC domain-containing protein 3 (Nudcd3), found in Mus musculus (Mouse).